Consider the following 227-residue polypeptide: UPF0173 metal-dependent hydrolase BCE_4747 (227 aa).

The protein belongs to the UPF0173 family.

This Bacillus cereus (strain ATCC 10987 / NRS 248) protein is UPF0173 metal-dependent hydrolase BCE_4747.